A 164-amino-acid chain; its full sequence is Lipoprotein signal peptidase (164 aa).

The next 3 membrane-spanning stretches (helical) occupy residues 12 to 32, 70 to 90, and 93 to 113; these read FLWL…WIVA, WLFT…LKET, and QQVM…GNVF. Catalysis depends on residues D123 and D141. Residues 133-153 form a helical membrane-spanning segment; the sequence is YWPAFNVADSAICLGAFLLVI.

The protein belongs to the peptidase A8 family.

The protein resides in the cell inner membrane. It catalyses the reaction Release of signal peptides from bacterial membrane prolipoproteins. Hydrolyzes -Xaa-Yaa-Zaa-|-(S,diacylglyceryl)Cys-, in which Xaa is hydrophobic (preferably Leu), and Yaa (Ala or Ser) and Zaa (Gly or Ala) have small, neutral side chains.. Its pathway is protein modification; lipoprotein biosynthesis (signal peptide cleavage). In terms of biological role, this protein specifically catalyzes the removal of signal peptides from prolipoproteins. The sequence is that of Lipoprotein signal peptidase from Pseudoalteromonas atlantica (strain T6c / ATCC BAA-1087).